A 124-amino-acid polypeptide reads, in one-letter code: Small ribosomal subunit protein uS13 (124 aa).

Residues 95 to 124 (GLPVRGQRTKTNARTRKGPKRTIAGKKKAR) are disordered.

The protein belongs to the universal ribosomal protein uS13 family. As to quaternary structure, part of the 30S ribosomal subunit. Forms a loose heterodimer with protein S19. Forms two bridges to the 50S subunit in the 70S ribosome.

Its function is as follows. Located at the top of the head of the 30S subunit, it contacts several helices of the 16S rRNA. In the 70S ribosome it contacts the 23S rRNA (bridge B1a) and protein L5 of the 50S subunit (bridge B1b), connecting the 2 subunits; these bridges are implicated in subunit movement. Contacts the tRNAs in the A and P-sites. The sequence is that of Small ribosomal subunit protein uS13 from Mycobacteroides abscessus (strain ATCC 19977 / DSM 44196 / CCUG 20993 / CIP 104536 / JCM 13569 / NCTC 13031 / TMC 1543 / L948) (Mycobacterium abscessus).